The sequence spans 372 residues: Cytoplasmic tRNA 2-thiolation protein 1 (372 aa).

The interval Gly-335–Phe-372 is disordered. A compositionally biased stretch (gly residues) spans Gly-341–Cys-351. Basic and acidic residues predominate over residues Glu-361–Phe-372.

The protein belongs to the TtcA family. CTU1/NCS6/ATPBD3 subfamily.

It localises to the cytoplasm. Its pathway is tRNA modification; 5-methoxycarbonylmethyl-2-thiouridine-tRNA biosynthesis. Its function is as follows. Plays a central role in 2-thiolation of mcm(5)S(2)U at tRNA wobble positions of tRNA(Lys), tRNA(Glu) and tRNA(Gln). Directly binds tRNAs and probably acts by catalyzing adenylation of tRNAs, an intermediate required for 2-thiolation. It is unclear whether it acts as a sulfurtransferase that transfers sulfur from thiocarboxylated URM1 onto the uridine of tRNAs at wobble position. This is Cytoplasmic tRNA 2-thiolation protein 1 from Caenorhabditis briggsae.